The primary structure comprises 465 residues: MEKLSNGVRDHCLISDYVSPSAPAPLKQPFVIGVAGGTASGKTTVCNMIMSQLHDQRVVLVNQDSFYHSLTKEKLNKVHEYNFDHPDAFNTEVLLSCMEKLRSGQPVNIPSYDFKIHQSIESSSPVNPGDVIILEGILVLNDPRVRDLMNMKIFVDTDADVRLSRRIQRDTVERGRNIQNVLEQYTKFVKPSFDEYIQPSMKYADIIIPRGGDNDVAIDLIVQHIRTKLCQHNLCKIYSNIFIISSTFQIKGMHTLIRDINTTKHDFVFYADRLIRLVVEHGLGHLPFTEKQITTPTGSVYTGVDFCKRLCGVSVIRSGESMENALRACCNGIKIGKILIHRENNDGRQLIYEKLPKDISSRHVFLLDPVLASGYSAVKAITLLLSKGVPESHIIFLNLIAAPQGIHALCKKFPMLKIVTSEIDSSLNEDSRVIPGLGEFADRYFGTNNINSKVSSLSTNLKLRS.

The segment at 26-230 (LKQPFVIGVA…IVQHIRTKLC (205 aa)) is uridine kinase. The uracil phosphoribosyltransferase stretch occupies residues 240–465 (NIFIISSTFQ…SLSTNLKLRS (226 aa)). Residues Lys264, Arg273, and 307–310 (CKRL) contribute to the GTP site. 5-phospho-alpha-D-ribose 1-diphosphate contacts are provided by Arg317 and Arg342. Position 362 (Arg362) interacts with GTP. 5-phospho-alpha-D-ribose 1-diphosphate-binding positions include Asp368, 373-376 (SGYS), and Glu439. Residue 438–440 (GEF) participates in uracil binding.

The protein in the N-terminal section; belongs to the uridine kinase family. This sequence in the C-terminal section; belongs to the UPRTase family. It depends on Mg(2+) as a cofactor.

The enzyme catalyses UMP + diphosphate = 5-phospho-alpha-D-ribose 1-diphosphate + uracil. The catalysed reaction is cytidine + ATP = CMP + ADP + H(+). It carries out the reaction uridine + ATP = UMP + ADP + H(+). It participates in pyrimidine metabolism; UMP biosynthesis via salvage pathway; UMP from uracil: step 1/1. It functions in the pathway pyrimidine metabolism; CTP biosynthesis via salvage pathway; CTP from cytidine: step 1/3. Its pathway is pyrimidine metabolism; UMP biosynthesis via salvage pathway; UMP from uridine: step 1/1. With respect to regulation, allosterically activated by GTP. In terms of biological role, involved in the pyrimidine salvage pathway. This is Uridine kinase-like protein 5 (UKL5) from Arabidopsis thaliana (Mouse-ear cress).